The chain runs to 228 residues: Biosynthetic peptidoglycan transglycosylase (228 aa).

Residues 8–28 traverse the membrane as a helical segment; it reads ILAALVAAFLLYNLWVLGHII.

The protein belongs to the glycosyltransferase 51 family.

The protein localises to the cell inner membrane. It carries out the reaction [GlcNAc-(1-&gt;4)-Mur2Ac(oyl-L-Ala-gamma-D-Glu-L-Lys-D-Ala-D-Ala)](n)-di-trans,octa-cis-undecaprenyl diphosphate + beta-D-GlcNAc-(1-&gt;4)-Mur2Ac(oyl-L-Ala-gamma-D-Glu-L-Lys-D-Ala-D-Ala)-di-trans,octa-cis-undecaprenyl diphosphate = [GlcNAc-(1-&gt;4)-Mur2Ac(oyl-L-Ala-gamma-D-Glu-L-Lys-D-Ala-D-Ala)](n+1)-di-trans,octa-cis-undecaprenyl diphosphate + di-trans,octa-cis-undecaprenyl diphosphate + H(+). Its pathway is cell wall biogenesis; peptidoglycan biosynthesis. Peptidoglycan polymerase that catalyzes glycan chain elongation from lipid-linked precursors. In Chromobacterium violaceum (strain ATCC 12472 / DSM 30191 / JCM 1249 / CCUG 213 / NBRC 12614 / NCIMB 9131 / NCTC 9757 / MK), this protein is Biosynthetic peptidoglycan transglycosylase.